The chain runs to 108 residues: Translation initiation factor 1A (108 aa).

An S1-like domain is found at 11-85; sequence PSRDVPKPEE…NRCDILYKYG (75 aa).

It belongs to the eIF-1A family.

In terms of biological role, seems to be required for maximal rate of protein biosynthesis. Enhances ribosome dissociation into subunits and stabilizes the binding of the initiator Met-tRNA(I) to 40 S ribosomal subunits. This is Translation initiation factor 1A (eIF1A) from Saccharolobus islandicus (strain Y.N.15.51 / Yellowstone #2) (Sulfolobus islandicus).